We begin with the raw amino-acid sequence, 158 residues long: Secreted frizzled-related protein 1 (158 aa).

The region spanning 1-34 (VRDSCEPVMQFFGFYWPEMLKCDKFPEGDVCIAM) is the FZ domain. N38 carries an N-linked (GlcNAc...) asparagine glycan. 2 cysteine pairs are disulfide-bonded: C51-C121 and C68-C123. An NTR domain is found at 51-158 (CPPCDNELKS…IHKWDKKNKE (108 aa)).

This sequence belongs to the secreted frizzled-related protein (sFRP) family. As to quaternary structure, interacts with WNT4, WNT1, WNT2, WNT8, MYOC and FRZD6.

The protein localises to the secreted. Its function is as follows. Soluble frizzled-related proteins (sFRPS) function as modulators of Wnt signaling through direct interaction with Wnts. They have a role in regulating cell growth and differentiation in specific cell types. SFRP1 decreases intracellular beta-catenin levels. Has antiproliferative effects on vascular cells, in vitro and in vivo, and can induce, in vivo, an angiogenic response. In vascular cell cycle, delays the G1 phase and entry into the S phase. In kidney development, inhibits tubule formation and bud growth in metanephroi. Inhibits WNT1/WNT4-mediated TCF-dependent transcription. This is Secreted frizzled-related protein 1 (Sfrp1) from Rattus norvegicus (Rat).